Here is a 126-residue protein sequence, read N- to C-terminus: Adenosine 5'-monophosphoramidase HINT1 (126 aa).

Ala2 is subject to N-acetylalanine. Positions 18–126 (IFGKIIRKEI…GGRQMHWPPG (109 aa)) constitute an HIT domain. N6-acetyllysine is present on residues Lys21 and Lys30. 43-44 (DI) provides a ligand contact to AMP. Residues Ser45 and Ser72 each carry the phosphoserine modification. AMP-binding positions include Asn99, 105–107 (GQS), and 112–114 (HLH). The short motif at 110-114 (HVHLH) is the Histidine triad motif element. The active-site Tele-AMP-histidine intermediate is His112.

The protein belongs to the HINT family. As to quaternary structure, homodimer. Interacts with CDK7. Interacts with RUVBL1 and RUVBL2 and is associated with the LEF1/TCF1-CTNNB1 complex and with a KAT5 histone acetyltransferase complex. Identified in a complex with MITF and CTNNB1. Interacts with CDC34 and RBX1, and is part of a SCF (SKP2-CUL1-F-box protein) E3 ubiquitin-protein ligase complex. Interacts with SUMO1, SUMO2 and RGS17. Interacts with the Ten-1 ICD form of TENM1. Interacts with CALM1; interaction increases in the presence of calcium ions. As to expression, widely expressed.

It is found in the cytoplasm. It localises to the nucleus. It carries out the reaction adenosine 5'-phosphoramidate + H2O = AMP + NH4(+). Exhibits adenosine 5'-monophosphoramidase activity, hydrolyzing purine nucleotide phosphoramidates with a single phosphate group such as adenosine 5'monophosphoramidate (AMP-NH2) to yield AMP and NH2. Hydrolyzes adenosine 5'monophosphomorpholidate (AMP-morpholidate) and guanosine 5'monophosphomorpholidate (GMP-morpholidate). Hydrolyzes lysyl-AMP (AMP-N-epsilon-(N-alpha-acetyl lysine methyl ester)) generated by lysine tRNA ligase, as well as Met-AMP, His-AMP and Asp-AMP, lysyl-GMP (GMP-N-epsilon-(N-alpha-acetyl lysine methyl ester)) and AMP-N-alanine methyl ester. Hydrolyzes 3-indolepropionic acyl-adenylate, tryptamine adenosine phosphoramidate monoester and other fluorogenic purine nucleoside tryptamine phosphoramidates in vitro. Can also convert adenosine 5'-O-phosphorothioate and guanosine 5'-O-phosphorothioate to the corresponding nucleoside 5'-O-phosphates with concomitant release of hydrogen sulfide. In addition, functions as scaffolding protein that modulates transcriptional activation by the LEF1/TCF1-CTNNB1 complex and by the complex formed with MITF and CTNNB1. Modulates p53/TP53 levels and p53/TP53-mediated apoptosis. Modulates proteasomal degradation of target proteins by the SCF (SKP2-CUL1-F-box protein) E3 ubiquitin-protein ligase complex. Also exhibits SUMO-specific isopeptidase activity, deconjugating SUMO1 from RGS17. Deconjugates SUMO1 from RANGAP1. The chain is Adenosine 5'-monophosphoramidase HINT1 (HINT1) from Homo sapiens (Human).